Reading from the N-terminus, the 842-residue chain is Protein translocase subunit SecA (842 aa).

ATP-binding positions include Gln-85, Gly-103–Thr-107, and Asp-493. Residues Cys-825, Cys-827, Cys-836, and His-837 each coordinate Zn(2+).

The protein belongs to the SecA family. As to quaternary structure, monomer and homodimer. Part of the essential Sec protein translocation apparatus which comprises SecA, SecYEG and auxiliary proteins SecDF. Other proteins may also be involved. Zn(2+) serves as cofactor.

The protein localises to the cell membrane. The protein resides in the cytoplasm. The catalysed reaction is ATP + H2O + cellular proteinSide 1 = ADP + phosphate + cellular proteinSide 2.. In terms of biological role, part of the Sec protein translocase complex. Interacts with the SecYEG preprotein conducting channel. Has a central role in coupling the hydrolysis of ATP to the transfer of proteins into and across the cell membrane, serving as an ATP-driven molecular motor driving the stepwise translocation of polypeptide chains across the membrane. The protein is Protein translocase subunit SecA of Streptococcus equi subsp. zooepidemicus (strain H70).